Here is a 167-residue protein sequence, read N- to C-terminus: Interferon gamma (167 aa).

Residues methionine 1–cysteine 23 form the signal peptide. Glutamine 24 is subject to Pyrrolidone carboxylic acid. 2 N-linked (GlcNAc...) asparagine glycosylation sites follow: asparagine 39 and asparagine 105. The interval serine 148–isoleucine 167 is disordered. Over residues asparagine 149–isoleucine 167 the composition is skewed to basic residues.

It belongs to the type II (or gamma) interferon family. Homodimer. Interacts with IFNGR1 (via extracellular domain); this interaction promotes IFNGR1 dimerization. As to expression, released primarily from activated T lymphocytes.

Its subcellular location is the secreted. In terms of biological role, type II interferon produced by immune cells such as T-cells and NK cells that plays crucial roles in antimicrobial, antiviral, and antitumor responses by activating effector immune cells and enhancing antigen presentation. Primarily signals through the JAK-STAT pathway after interaction with its receptor IFNGR1 to affect gene regulation. Upon IFNG binding, IFNGR1 intracellular domain opens out to allow association of downstream signaling components JAK2, JAK1 and STAT1, leading to STAT1 activation, nuclear translocation and transcription of IFNG-regulated genes. Many of the induced genes are transcription factors such as IRF1 that are able to further drive regulation of a next wave of transcription. Plays a role in class I antigen presentation pathway by inducing a replacement of catalytic proteasome subunits with immunoproteasome subunits. In turn, increases the quantity, quality, and repertoire of peptides for class I MHC loading. Increases the efficiency of peptide generation also by inducing the expression of activator PA28 that associates with the proteasome and alters its proteolytic cleavage preference. Up-regulates as well MHC II complexes on the cell surface by promoting expression of several key molecules such as cathepsins B/CTSB, H/CTSH, and L/CTSL. Participates in the regulation of hematopoietic stem cells during development and under homeostatic conditions by affecting their development, quiescence, and differentiation. In Dasypus novemcinctus (Nine-banded armadillo), this protein is Interferon gamma (IFNG).